The chain runs to 479 residues: Catalase A (479 aa).

Histidine 63 is an active-site residue. Position 346 (tyrosine 346) interacts with heme.

It belongs to the catalase family. The cofactor is heme.

Its subcellular location is the peroxisome matrix. The catalysed reaction is 2 H2O2 = O2 + 2 H2O. Catalyzes the degradation of hydrogen peroxide (H(2)O(2)) generated by peroxisomal oxidases to water and oxygen, thereby protecting cells from the toxic effects of hydrogen peroxide. The chain is Catalase A (catA) from Botryotinia fuckeliana (Noble rot fungus).